The chain runs to 234 residues: Leucyl/phenylalanyl-tRNA--protein transferase (234 aa).

Belongs to the L/F-transferase family.

It localises to the cytoplasm. The enzyme catalyses N-terminal L-lysyl-[protein] + L-leucyl-tRNA(Leu) = N-terminal L-leucyl-L-lysyl-[protein] + tRNA(Leu) + H(+). It carries out the reaction N-terminal L-arginyl-[protein] + L-leucyl-tRNA(Leu) = N-terminal L-leucyl-L-arginyl-[protein] + tRNA(Leu) + H(+). It catalyses the reaction L-phenylalanyl-tRNA(Phe) + an N-terminal L-alpha-aminoacyl-[protein] = an N-terminal L-phenylalanyl-L-alpha-aminoacyl-[protein] + tRNA(Phe). Its function is as follows. Functions in the N-end rule pathway of protein degradation where it conjugates Leu, Phe and, less efficiently, Met from aminoacyl-tRNAs to the N-termini of proteins containing an N-terminal arginine or lysine. This is Leucyl/phenylalanyl-tRNA--protein transferase from Shigella dysenteriae serotype 1 (strain Sd197).